The sequence spans 344 residues: Anthranilate phosphoribosyltransferase (344 aa).

Residues Gly-84, 87–88 (GD), Thr-92, 94–97 (NIST), 112–120 (KHGGRSVSS), and Ser-124 contribute to the 5-phospho-alpha-D-ribose 1-diphosphate site. Gly-84 contributes to the anthranilate binding site. Ser-96 is a binding site for Mg(2+). Arg-170 is a binding site for anthranilate. Mg(2+) is bound by residues Asp-229 and Glu-230.

The protein belongs to the anthranilate phosphoribosyltransferase family. As to quaternary structure, homodimer. It depends on Mg(2+) as a cofactor.

The enzyme catalyses N-(5-phospho-beta-D-ribosyl)anthranilate + diphosphate = 5-phospho-alpha-D-ribose 1-diphosphate + anthranilate. It participates in amino-acid biosynthesis; L-tryptophan biosynthesis; L-tryptophan from chorismate: step 2/5. Catalyzes the transfer of the phosphoribosyl group of 5-phosphorylribose-1-pyrophosphate (PRPP) to anthranilate to yield N-(5'-phosphoribosyl)-anthranilate (PRA). This is Anthranilate phosphoribosyltransferase from Janthinobacterium sp. (strain Marseille) (Minibacterium massiliensis).